A 62-amino-acid polypeptide reads, in one-letter code: Photosystem II reaction center protein H (62 aa).

A helical membrane pass occupies residues 30–50 (PVMAGIGFMLLIFLVTILQIY).

It belongs to the PsbH family. As to quaternary structure, PSII is composed of 1 copy each of membrane proteins PsbA, PsbB, PsbC, PsbD, PsbE, PsbF, PsbH, PsbI, PsbJ, PsbK, PsbL, PsbM, PsbT, PsbX, PsbY, Psb30/Ycf12, peripheral proteins PsbO, CyanoQ (PsbQ), PsbU, PsbV and a large number of cofactors. It forms dimeric complexes.

The protein localises to the cellular thylakoid membrane. Functionally, one of the components of the core complex of photosystem II (PSII), required for its stability and/or assembly. PSII is a light-driven water:plastoquinone oxidoreductase that uses light energy to abstract electrons from H(2)O, generating O(2) and a proton gradient subsequently used for ATP formation. It consists of a core antenna complex that captures photons, and an electron transfer chain that converts photonic excitation into a charge separation. The sequence is that of Photosystem II reaction center protein H from Prochlorococcus marinus (strain MIT 9303).